A 399-amino-acid chain; its full sequence is Succinate--CoA ligase [ADP-forming] subunit beta (399 aa).

Residues 9–254 (KAVLKSFGAP…TTEEDEKEIE (246 aa)) form the ATP-grasp domain. Residues Lys-46, 53–55 (GRG), Glu-109, Ala-112, and Glu-117 each bind ATP. Mg(2+)-binding residues include Asn-209 and Asp-223. Residues Asn-274 and 331 to 333 (GIM) contribute to the substrate site.

Belongs to the succinate/malate CoA ligase beta subunit family. As to quaternary structure, heterotetramer of two alpha and two beta subunits. The cofactor is Mg(2+).

It catalyses the reaction succinate + ATP + CoA = succinyl-CoA + ADP + phosphate. The catalysed reaction is GTP + succinate + CoA = succinyl-CoA + GDP + phosphate. It functions in the pathway carbohydrate metabolism; tricarboxylic acid cycle; succinate from succinyl-CoA (ligase route): step 1/1. Its function is as follows. Succinyl-CoA synthetase functions in the citric acid cycle (TCA), coupling the hydrolysis of succinyl-CoA to the synthesis of either ATP or GTP and thus represents the only step of substrate-level phosphorylation in the TCA. The beta subunit provides nucleotide specificity of the enzyme and binds the substrate succinate, while the binding sites for coenzyme A and phosphate are found in the alpha subunit. In Maricaulis maris (strain MCS10) (Caulobacter maris), this protein is Succinate--CoA ligase [ADP-forming] subunit beta.